A 476-amino-acid polypeptide reads, in one-letter code: Glycogen synthase (476 aa).

Lys-15 contacts ADP-alpha-D-glucose.

This sequence belongs to the glycosyltransferase 1 family. Bacterial/plant glycogen synthase subfamily.

The enzyme catalyses [(1-&gt;4)-alpha-D-glucosyl](n) + ADP-alpha-D-glucose = [(1-&gt;4)-alpha-D-glucosyl](n+1) + ADP + H(+). It functions in the pathway glycan biosynthesis; glycogen biosynthesis. Its function is as follows. Synthesizes alpha-1,4-glucan chains using ADP-glucose. The polypeptide is Glycogen synthase (Yersinia enterocolitica serotype O:8 / biotype 1B (strain NCTC 13174 / 8081)).